Here is an 82-residue protein sequence, read N- to C-terminus: Defensin-like protein 7 (82 aa).

An N-terminal signal peptide occupies residues 1–29 (MKSSTTSMQLIPTLFFLTILLASPEMVEG). The residue at position 30 (Q30) is a Pyrrolidone carboxylic acid. 4 disulfides stabilise this stretch: C33–C77, C44–C64, C50–C71, and C54–C73.

The protein belongs to the DEFL family. Expressed in stems, roots, rosette leaves and flower buds.

Its subcellular location is the secreted. The sequence is that of Defensin-like protein 7 (LCR75) from Arabidopsis thaliana (Mouse-ear cress).